We begin with the raw amino-acid sequence, 89 residues long: Small ribosomal subunit protein uS15 (89 aa).

This sequence belongs to the universal ribosomal protein uS15 family. In terms of assembly, part of the 30S ribosomal subunit. Forms a bridge to the 50S subunit in the 70S ribosome, contacting the 23S rRNA.

In terms of biological role, one of the primary rRNA binding proteins, it binds directly to 16S rRNA where it helps nucleate assembly of the platform of the 30S subunit by binding and bridging several RNA helices of the 16S rRNA. Functionally, forms an intersubunit bridge (bridge B4) with the 23S rRNA of the 50S subunit in the ribosome. This Methylobacterium nodulans (strain LMG 21967 / CNCM I-2342 / ORS 2060) protein is Small ribosomal subunit protein uS15.